The sequence spans 393 residues: Methylthioribose kinase (393 aa).

ATP contacts are provided by residues Asn38, Lys53, and 107–109 (EDL). Asp225 contacts substrate. Position 242–244 (242–244 (DPE)) interacts with ATP. Position 332 (Arg332) interacts with substrate.

The protein belongs to the methylthioribose kinase family. In terms of assembly, homodimer.

The enzyme catalyses 5-(methylsulfanyl)-D-ribose + ATP = 5-(methylsulfanyl)-alpha-D-ribose 1-phosphate + ADP + H(+). It participates in amino-acid biosynthesis; L-methionine biosynthesis via salvage pathway; S-methyl-5-thio-alpha-D-ribose 1-phosphate from S-methyl-5'-thioadenosine (hydrolase route): step 2/2. In terms of biological role, catalyzes the phosphorylation of methylthioribose into methylthioribose-1-phosphate. This Bacillus cereus (strain ATCC 10987 / NRS 248) protein is Methylthioribose kinase.